Reading from the N-terminus, the 337-residue chain is Large ribosomal subunit protein uL3 (337 aa).

The interval M1 to E32 is disordered.

This sequence belongs to the universal ribosomal protein uL3 family. In terms of assembly, part of the 50S ribosomal subunit. Forms a cluster with proteins L14 and L24e.

Its function is as follows. One of the primary rRNA binding proteins, it binds directly near the 3'-end of the 23S rRNA, where it nucleates assembly of the 50S subunit. The polypeptide is Large ribosomal subunit protein uL3 (Methanococcoides burtonii (strain DSM 6242 / NBRC 107633 / OCM 468 / ACE-M)).